Reading from the N-terminus, the 342-residue chain is MLKDQNLDIERKQDHIEINLTKNVESTLKSGFESIHFIHNALPEINYDSVNTTTTFLGKSLQAPILISSMTGGTTRARDINYRLAQVAQKAGIAMGLGSMRVLLTEPDTIKTFAVRHIAPDIPLLANIGAVQLNYGVTPKECQYLVDAIKADALILHLNVLQELTQPEGNRNWEKLLPKIREVVNYLSIPVIVKEVGYGLSKKVAESLIDAGVKVLDIAGSGGTSWSQVEAYRATNSLQNRIASSFINWGIPTLDSLKMVREVSKDIPIITSGGLKSGIDGAKAIRIGANIFGLAGQFLKAADTSESLLSEEIQLIIEQLKITMLCTGSRTLKDLAKAEIRL.

Residue 11-12 coordinates substrate; that stretch reads RK. FMN is bound by residues serine 68, 69–71, serine 99, and asparagine 127; that span reads SMT. A substrate-binding site is contributed by 99–101; sequence SMR. Glutamine 162 contributes to the substrate binding site. Glutamate 163 lines the Mg(2+) pocket. Residues lysine 194, threonine 224, 274-276, and 295-296 each bind FMN; these read GLK and AG.

The protein belongs to the IPP isomerase type 2 family. As to quaternary structure, homooctamer. Dimer of tetramers. The cofactor is FMN. NADPH serves as cofactor. It depends on Mg(2+) as a cofactor.

It is found in the cytoplasm. The enzyme catalyses isopentenyl diphosphate = dimethylallyl diphosphate. Involved in the biosynthesis of isoprenoids. Catalyzes the 1,3-allylic rearrangement of the homoallylic substrate isopentenyl (IPP) to its allylic isomer, dimethylallyl diphosphate (DMAPP). The polypeptide is Isopentenyl-diphosphate delta-isomerase (Rickettsia africae (strain ESF-5)).